Consider the following 125-residue polypeptide: Holo-[acyl-carrier-protein] synthase (125 aa).

Mg(2+) contacts are provided by Asp8 and Glu60.

The protein belongs to the P-Pant transferase superfamily. AcpS family. Mg(2+) is required as a cofactor.

The protein resides in the cytoplasm. The catalysed reaction is apo-[ACP] + CoA = holo-[ACP] + adenosine 3',5'-bisphosphate + H(+). Its function is as follows. Transfers the 4'-phosphopantetheine moiety from coenzyme A to a Ser of acyl-carrier-protein. The protein is Holo-[acyl-carrier-protein] synthase of Wolbachia sp. subsp. Brugia malayi (strain TRS).